The sequence spans 214 residues: MSNGHVKFDADESQASASAVTDRQDDVLVISKKDKEVHSSSDEESDDDDAPQEEGLHSGKSEVESQITQREEAIRLEQSQLRSKRRKQNELYAKQKKSVNETEVTDEVIAELPEELLKNIDQKDEGSTQYSSSRHVTFDKLDESDENEEALAKAIKTKKRKTLKNLRKDSVKRGKFRVQLLSTTQDSKTLPPKKESSIIRSKDRWLNRKALNKG.

The segment covering 1–10 (MSNGHVKFDA) has biased composition (basic and acidic residues). A disordered region spans residues 1-106 (MSNGHVKFDA…KSVNETEVTD (106 aa)). Phosphoserine is present on S16. The span at 22–41 (DRQDDVLVISKKDKEVHSSS) shows a compositional bias: basic and acidic residues. A compositionally biased stretch (acidic residues) spans 42–52 (DEESDDDDAPQ). Phosphoserine is present on residues S45, S65, and S144. Residues 54 to 75 (EGLHSGKSEVESQITQREEAIR) show a composition bias toward basic and acidic residues. Residues 182 to 214 (STTQDSKTLPPKKESSIIRSKDRWLNRKALNKG) are disordered. Basic and acidic residues predominate over residues 192–206 (PKKESSIIRSKDRWL).

This sequence belongs to the UTP16 family. Part of the small subunit (SSU) processome composed of at least 40 protein subunits and the RNA chaperone small nucleolar RNA (snoRNA) U3. Interacts with snoRNA U3. Interacts with MPP10.

The protein localises to the nucleus. The protein resides in the nucleolus. Functions as part of the small subunit (SSU) processome, first precursor of the small eukaryotic ribosomal subunit that coordinates the first two steps of ribosome biogenesis in transcription of the primary transcript pre-RNA and pre-18S processing. During the assembly of the SSU processome in the nucleolus, many ribosome biogenesis factors, an RNA chaperone and ribosomal proteins associate with the nascent pre-rRNA and work in concert to generate RNA folding, modifications, rearrangements and cleavage as well as targeted degradation of pre-ribosomal RNA by the RNA exosome. Has a role in bud site selection maybe via the regulation of expression of bipolar budding components. The protein is U3 small nucleolar RNA-associated protein 16 (BUD21) of Saccharomyces cerevisiae (strain ATCC 204508 / S288c) (Baker's yeast).